Here is a 335-residue protein sequence, read N- to C-terminus: Mitochondrial uncoupling protein 4C (335 aa).

Solcar repeat units follow at residues 34 to 125 (RNLF…FRRP), 137 to 229 (LKIY…SKRT), and 238 to 329 (EGLP…LRQW). Transmembrane regions (helical) follow at residues 40-57 (YVNT…VFPL), 100-118 (GFSA…RVVL), 138-157 (KIYM…QALA), 204-223 (GVGP…VGSY), 244-264 (FVSS…ADVI), and 304-323 (GLMP…WLSV).

It belongs to the mitochondrial carrier (TC 2.A.29) family.

It localises to the mitochondrion inner membrane. Its function is as follows. Mitochondrial protein that is likely to be responsible for thermogenic respiration. Likely to function in mitochondrial uncoupling i.e. creating mitochondrial proton leaks across the inner mitochondrial membrane and can therefore dissipate the mitochondrial proton gradient and convert the energy of substrate oxidation into heat instead of ATP. Involved in cold tolerance, it is required for development to the adult stage at low temperatures. In Drosophila melanogaster (Fruit fly), this protein is Mitochondrial uncoupling protein 4C.